The chain runs to 211 residues: ATP phosphoribosyltransferase (211 aa).

Belongs to the ATP phosphoribosyltransferase family. Short subfamily. Heteromultimer composed of HisG and HisZ subunits.

The protein resides in the cytoplasm. It catalyses the reaction 1-(5-phospho-beta-D-ribosyl)-ATP + diphosphate = 5-phospho-alpha-D-ribose 1-diphosphate + ATP. It functions in the pathway amino-acid biosynthesis; L-histidine biosynthesis; L-histidine from 5-phospho-alpha-D-ribose 1-diphosphate: step 1/9. Its function is as follows. Catalyzes the condensation of ATP and 5-phosphoribose 1-diphosphate to form N'-(5'-phosphoribosyl)-ATP (PR-ATP). Has a crucial role in the pathway because the rate of histidine biosynthesis seems to be controlled primarily by regulation of HisG enzymatic activity. The chain is ATP phosphoribosyltransferase from Bacillus cereus (strain 03BB102).